The chain runs to 271 residues: Urease accessory protein UreD (271 aa).

This sequence belongs to the UreD family. UreD, UreF and UreG form a complex that acts as a GTP-hydrolysis-dependent molecular chaperone, activating the urease apoprotein by helping to assemble the nickel containing metallocenter of UreC. The UreE protein probably delivers the nickel.

It localises to the cytoplasm. Functionally, required for maturation of urease via the functional incorporation of the urease nickel metallocenter. The polypeptide is Urease accessory protein UreD (Haemophilus influenzae (strain 86-028NP)).